The chain runs to 156 residues: Ribosomal RNA large subunit methyltransferase H (156 aa).

Residues leucine 73, glycine 104, and isoleucine 123–leucine 128 each bind S-adenosyl-L-methionine.

The protein belongs to the RNA methyltransferase RlmH family. Homodimer.

It localises to the cytoplasm. It carries out the reaction pseudouridine(1915) in 23S rRNA + S-adenosyl-L-methionine = N(3)-methylpseudouridine(1915) in 23S rRNA + S-adenosyl-L-homocysteine + H(+). Specifically methylates the pseudouridine at position 1915 (m3Psi1915) in 23S rRNA. The chain is Ribosomal RNA large subunit methyltransferase H from Xanthomonas euvesicatoria pv. vesicatoria (strain 85-10) (Xanthomonas campestris pv. vesicatoria).